Consider the following 1207-residue polypeptide: Histidine kinase 1 (1207 aa).

A compositionally biased stretch (polar residues) spans 1–10; sequence MRGDSFSMSI. Positions 1–20 are disordered; it reads MRGDSFSMSIENLPDSPMGS. At 1-81 the chain is on the cytoplasmic side; it reads MRGDSFSMSI…SSYYSVFVVR (81 aa). The helical transmembrane segment at 82-102 threads the bilayer; the sequence is LAIMVMLAILIGLLTVLTWHF. The Extracellular segment spans residues 103–446; the sequence is TRIYTKQSLQ…GKVDERAFKT (344 aa). Residues 447 to 467 form a helical membrane-spanning segment; the sequence is LIILISASVCIFFIGCVCILI. Topologically, residues 468-1207 are cytoplasmic; sequence LTNGVSKEMK…PSAFQTSLSA (740 aa). In terms of domain architecture, Histidine kinase spans 505-763; that stretch reads NMSHELRTPM…LMRLYLILST (259 aa). H508 is subject to Phosphohistidine; by autocatalysis. Disordered regions lie at residues 964–987 and 1000–1021; these read DTCSSDDSSETSGEKQVDKSVKPS and DATTSNDDSTSASMTQKNPEEE. Positions 975-984 are enriched in basic and acidic residues; the sequence is SGEKQVDKSV. Low complexity predominate over residues 1000–1014; it reads DATTSNDDSTSASMT. One can recognise a Response regulatory domain in the interval 1045-1196; that stretch reads RILLAEDTPV…LMVSTILSLT (152 aa). D1127 is modified (4-aspartylphosphate).

As to quaternary structure, interacts with AHP2, depending of the phosphorylation state of Asp-1075 in the receiver domain, but probably not with AHP1 and AHP3. In terms of processing, autophosphorylated predominantly on His residues. Activation probably requires a transfer of a phosphate group between a His in the transmitter domain and an Asp of the receiver domain. In terms of tissue distribution, mostly expressed in roots, and, to a lower extent, in stems, leaves and flowers.

It localises to the cell membrane. It catalyses the reaction ATP + protein L-histidine = ADP + protein N-phospho-L-histidine.. Functionally, functions as an osmosensor histidine kinase that detects water stress and transmits the stress signal to a downstream MAPK cascade. This protein undergoes an ATP-dependent autophosphorylation at a conserved histidine residue in the kinase core, and a phosphoryl group is then transferred to a conserved aspartate residue in the receiver domain. Positive regulator of drought and salt stress responses, and abscisic acid (ABA) signaling. Confers drought tolerance, probably by regulating levels of ABA accumulation. Plays a redundant role in regulating plant growth and development. Required for the regulation of desiccation processes during seed formation. In Arabidopsis thaliana (Mouse-ear cress), this protein is Histidine kinase 1 (AHK1).